The following is a 787-amino-acid chain: Signal transducer and activator of transcription 5B (787 aa).

At Tyr90 the chain carries Phosphotyrosine. At Ser128 the chain carries Phosphoserine. An SH2 domain is found at 589–686 (WNDGAILGFV…EVYSKYYTPV (98 aa)). Tyr682 carries the post-translational modification Phosphotyrosine. Residue Tyr699 is modified to Phosphotyrosine; by HCK, JAK and PTK6.

Belongs to the transcription factor STAT family. Upon activation, forms a homodimer or a heterodimer with a related family member. Binds NR3C1. Interacts with NCOA1. Interacts with NMI. Interacts with SOCS7. Interacts (via SH2 domain) with INSR. Interacts with CPEB3; this inhibits STAT5B-mediated transcriptional activation. Post-translationally, tyrosine phosphorylated in response to signaling via activated KIT, resulting in translocation to the nucleus. Tyrosine phosphorylated in response to signaling via activated FLT3; wild-type FLT3 results in much weaker phosphorylation than constitutively activated mutant FLT3. Alternatively, can be phosphorylated by JAK2. Phosphorylation at Tyr-699 by PTK6 or HCK leads to an increase of its transcriptional activity.

It localises to the cytoplasm. The protein resides in the nucleus. Its function is as follows. Carries out a dual function: signal transduction and activation of transcription. Mediates cellular responses to the cytokine KITLG/SCF and other growth factors. Binds to the GAS element and activates PRL-induced transcription. Positively regulates hematopoietic/erythroid differentiation. The protein is Signal transducer and activator of transcription 5B (STAT5B) of Bos taurus (Bovine).